Reading from the N-terminus, the 223-residue chain is Riboflavin kinase (223 aa).

The interval Met-1–Lys-89 is unknown. The segment at Val-90–Glu-223 is riboflavin kinase. Gly-99–Gln-104 contacts CDP. Residues Thr-128 and Asn-130 each coordinate Mg(2+). FMN-binding residues include Ser-185 and Glu-193. Residue Val-198 to Arg-201 coordinates CDP.

Belongs to the archaeal riboflavin kinase family. The cofactor is Mg(2+).

It carries out the reaction riboflavin + CTP = CDP + FMN + H(+). The protein operates within cofactor biosynthesis; FMN biosynthesis; FMN from riboflavin (CTP route): step 1/1. Functionally, catalyzes the CTP-dependent phosphorylation of riboflavin (vitamin B2) to form flavin mononucleotide (FMN). This is Riboflavin kinase (ribK) from Methanococcoides burtonii (strain DSM 6242 / NBRC 107633 / OCM 468 / ACE-M).